A 389-amino-acid polypeptide reads, in one-letter code: Phospho-N-acetylmuramoyl-pentapeptide-transferase (389 aa).

A run of 10 helical transmembrane segments spans residues 25–45 (RAVA…PWVI), 73–93 (TMGG…WADL), 97–117 (FIWI…VDDY), 135–155 (FWQS…VSEA), 189–209 (SMTY…VIVG), 222–242 (GLVI…AYVM), 259–279 (AGEM…FLWF), 286–306 (VFMG…IAVI), 311–331 (IVLF…MLQV), and 366–386 (QVVV…LSTL).

This sequence belongs to the glycosyltransferase 4 family. MraY subfamily. It depends on Mg(2+) as a cofactor.

The protein resides in the cell inner membrane. The enzyme catalyses UDP-N-acetyl-alpha-D-muramoyl-L-alanyl-gamma-D-glutamyl-meso-2,6-diaminopimeloyl-D-alanyl-D-alanine + di-trans,octa-cis-undecaprenyl phosphate = di-trans,octa-cis-undecaprenyl diphospho-N-acetyl-alpha-D-muramoyl-L-alanyl-D-glutamyl-meso-2,6-diaminopimeloyl-D-alanyl-D-alanine + UMP. Its pathway is cell wall biogenesis; peptidoglycan biosynthesis. In terms of biological role, catalyzes the initial step of the lipid cycle reactions in the biosynthesis of the cell wall peptidoglycan: transfers peptidoglycan precursor phospho-MurNAc-pentapeptide from UDP-MurNAc-pentapeptide onto the lipid carrier undecaprenyl phosphate, yielding undecaprenyl-pyrophosphoryl-MurNAc-pentapeptide, known as lipid I. The protein is Phospho-N-acetylmuramoyl-pentapeptide-transferase of Paraburkholderia phymatum (strain DSM 17167 / CIP 108236 / LMG 21445 / STM815) (Burkholderia phymatum).